The chain runs to 158 residues: SsrA-binding protein (158 aa).

Residues 134 to 158 (KLHDKRETEKERDWNRQKSRLLKTG) form a disordered region. Residues 137–149 (DKRETEKERDWNR) show a composition bias toward basic and acidic residues.

The protein belongs to the SmpB family.

The protein resides in the cytoplasm. Functionally, required for rescue of stalled ribosomes mediated by trans-translation. Binds to transfer-messenger RNA (tmRNA), required for stable association of tmRNA with ribosomes. tmRNA and SmpB together mimic tRNA shape, replacing the anticodon stem-loop with SmpB. tmRNA is encoded by the ssrA gene; the 2 termini fold to resemble tRNA(Ala) and it encodes a 'tag peptide', a short internal open reading frame. During trans-translation Ala-aminoacylated tmRNA acts like a tRNA, entering the A-site of stalled ribosomes, displacing the stalled mRNA. The ribosome then switches to translate the ORF on the tmRNA; the nascent peptide is terminated with the 'tag peptide' encoded by the tmRNA and targeted for degradation. The ribosome is freed to recommence translation, which seems to be the essential function of trans-translation. The sequence is that of SsrA-binding protein from Allorhizobium ampelinum (strain ATCC BAA-846 / DSM 112012 / S4) (Agrobacterium vitis (strain S4)).